An 86-amino-acid polypeptide reads, in one-letter code: MNSLLMITACFVLIGTVWAKDGYLVDAKGCKKNCYKLGKNDYCNRECRMKHRGGSYGYCYGFGCYCEGLSDSTPTWPLPNKTCSGK.

The N-terminal stretch at 1–19 (MNSLLMITACFVLIGTVWA) is a signal peptide. Positions 20 to 84 (KDGYLVDAKG…TWPLPNKTCS (65 aa)) constitute an LCN-type CS-alpha/beta domain. Cystine bridges form between cysteine 30-cysteine 83, cysteine 34-cysteine 59, cysteine 43-cysteine 64, and cysteine 47-cysteine 66. Serine 84 bears the Serine amide mark.

It belongs to the long (4 C-C) scorpion toxin superfamily. Sodium channel inhibitor family. Beta subfamily. As to expression, expressed by the venom gland.

It is found in the secreted. Beta toxins bind voltage-independently at site-4 of sodium channels (Nav) and shift the voltage of activation toward more negative potentials thereby affecting sodium channel activation and promoting spontaneous and repetitive firing. The sequence is that of Toxin Cn1 from Centruroides noxius (Mexican scorpion).